We begin with the raw amino-acid sequence, 142 residues long: Large ribosomal subunit protein uL13c (142 aa).

Belongs to the universal ribosomal protein uL13 family. In terms of assembly, part of the 50S ribosomal subunit.

The protein localises to the plastid. The protein resides in the chloroplast. This is Large ribosomal subunit protein uL13c from Pyropia yezoensis (Susabi-nori).